The chain runs to 750 residues: 5-methyltetrahydropteroyltriglutamate--homocysteine methyltransferase (750 aa).

5-methyltetrahydropteroyltri-L-glutamate is bound by residues 15–18 (RELK) and Lys114. Residues 425–427 (IGS) and Glu478 contribute to the L-homocysteine site. L-methionine-binding positions include 425–427 (IGS) and Glu478. A 5-methyltetrahydropteroyltri-L-glutamate-binding site is contributed by Trp555. Asp593 serves as a coordination point for L-homocysteine. Asp593 contacts L-methionine. Glu599 provides a ligand contact to 5-methyltetrahydropteroyltri-L-glutamate. Residues His636, Cys638, and Glu660 each coordinate Zn(2+). Catalysis depends on His689, which acts as the Proton donor. Residue Cys721 coordinates Zn(2+).

It belongs to the vitamin-B12 independent methionine synthase family. Zn(2+) serves as cofactor.

It carries out the reaction 5-methyltetrahydropteroyltri-L-glutamate + L-homocysteine = tetrahydropteroyltri-L-glutamate + L-methionine. It functions in the pathway amino-acid biosynthesis; L-methionine biosynthesis via de novo pathway; L-methionine from L-homocysteine (MetE route): step 1/1. Functionally, catalyzes the transfer of a methyl group from 5-methyltetrahydrofolate to homocysteine resulting in methionine formation. This is 5-methyltetrahydropteroyltriglutamate--homocysteine methyltransferase from Streptococcus sanguinis (strain SK36).